The primary structure comprises 225 residues: Dehydrin DHN4 (225 aa).

The tract at residues 1–78 (MEYQGQQHGR…EDDGMGGRRK (78 aa)) is disordered. Gly residues predominate over residues 21 to 39 (HGVGTGMGTHGGVGTGAAA). Repeat copies occupy residues 105–118 (YGQQ…TGGT), 119–136 (YGQQ…TDGT), 137–159 (YGQQ…TGGT), 160–178 (YGQQ…GTGG), and 179–199 (TYGQ…TGGT). A 5 X approximate tandem repeats region spans residues 105–199 (YGQQGTGMAG…GTGMHGTGGT (95 aa)).

It belongs to the plant dehydrin family.

This Hordeum vulgare (Barley) protein is Dehydrin DHN4 (DHN4).